The sequence spans 274 residues: Diaminopimelate epimerase (274 aa).

Substrate contacts are provided by Asn-11, Gln-44, and Asn-64. Residue Cys-73 is the Proton donor of the active site. Residues 74-75, Asn-157, Asn-190, and 208-209 contribute to the substrate site; these read GN and ER. The Proton acceptor role is filled by Cys-217. 218–219 contributes to the substrate binding site; the sequence is GS.

Belongs to the diaminopimelate epimerase family. As to quaternary structure, homodimer.

It localises to the cytoplasm. The catalysed reaction is (2S,6S)-2,6-diaminopimelate = meso-2,6-diaminopimelate. Its pathway is amino-acid biosynthesis; L-lysine biosynthesis via DAP pathway; DL-2,6-diaminopimelate from LL-2,6-diaminopimelate: step 1/1. Its function is as follows. Catalyzes the stereoinversion of LL-2,6-diaminopimelate (L,L-DAP) to meso-diaminopimelate (meso-DAP), a precursor of L-lysine and an essential component of the bacterial peptidoglycan. This Actinobacillus pleuropneumoniae serotype 3 (strain JL03) protein is Diaminopimelate epimerase.